The chain runs to 84 residues: Conotoxin Am6.1 (84 aa).

The N-terminal stretch at 1 to 19 (MEKLTILLLVAAVLMSTHA) is a signal peptide. Positions 20–47 (MFQGGGEKSRKAINFSETRKLARNKQKR) are excised as a propeptide. 3 disulfides stabilise this stretch: cysteine 48-cysteine 62, cysteine 55-cysteine 66, and cysteine 61-cysteine 71. Tryptophan 51 carries the post-translational modification 6'-bromotryptophan; in Am6.1b. Residues glutamate 60 and glutamate 64 each carry the 4-carboxyglutamate; partial; in Am6.1b and Am6.1c modification. Residues 78 to 84 (RTTSHPI) constitute a propeptide that is removed on maturation.

This sequence belongs to the conotoxin O2 family. Post-translationally, three forms of this peptides have been described. The unmodified Am6.1a (Am3286) is not detected in the venom; Am6.1b (Am3408) is only Trp brominated, while Am6.1c (Am3452) is both Trp brominated and Glu gamma-carboxyglutamated. Both Am6.1b and Am6.1c are detected in the venom. Expressed by the venom duct.

It localises to the secreted. Gamma-conotoxins may act on voltage-gated non-specific cation pacemaker channels (HCN). This Conus amadis (Amadis cone) protein is Conotoxin Am6.1.